We begin with the raw amino-acid sequence, 315 residues long: tRNA dimethylallyltransferase (315 aa).

13–20 contacts ATP; sequence GPTASGKT. 15–20 contacts substrate; the sequence is TASGKT. 4 interaction with substrate tRNA regions span residues 38–41, 162–166, 243–248, and 276–283; these read DSAL, QRLSR, RCVGYR, and KRQITWLR.

Belongs to the IPP transferase family. Monomer. It depends on Mg(2+) as a cofactor.

The enzyme catalyses adenosine(37) in tRNA + dimethylallyl diphosphate = N(6)-dimethylallyladenosine(37) in tRNA + diphosphate. Catalyzes the transfer of a dimethylallyl group onto the adenine at position 37 in tRNAs that read codons beginning with uridine, leading to the formation of N6-(dimethylallyl)adenosine (i(6)A). The sequence is that of tRNA dimethylallyltransferase from Vibrio vulnificus (strain CMCP6).